The primary structure comprises 301 residues: E3 ubiquitin-protein ligase DIS1 (301 aa).

The segment at 53-89 (CPVCLSAMYPPIHQCSNGHTLCSGCKPRVHNRCPTCR) adopts an RING-type; degenerate zinc-finger fold. Residues 106-166 (SLELPCKYQN…LVNHLKDDHK (61 aa)) form an SIAH-type; degenerate zinc finger.

The protein belongs to the SINA (Seven in absentia) family. As to quaternary structure, homodimer. Interacts with NEK6. Interacts with SKIPA.

It is found in the nucleus. The protein localises to the cytoplasm. It catalyses the reaction S-ubiquitinyl-[E2 ubiquitin-conjugating enzyme]-L-cysteine + [acceptor protein]-L-lysine = [E2 ubiquitin-conjugating enzyme]-L-cysteine + N(6)-ubiquitinyl-[acceptor protein]-L-lysine.. It functions in the pathway protein modification; protein ubiquitination. Functionally, E3 ubiquitin-protein ligase that mediates ubiquitination and subsequent proteasomal degradation of target proteins. E3 ubiquitin ligases accept ubiquitin from an E2 ubiquitin-conjugating enzyme in the form of a thioester and then directly transfers the ubiquitin to targeted substrates. Plays a negative role in drought stress tolerance through transcriptional and post-translational regulation of diverse stress-related genes. Interacts with the serine/threonine-protein kinase NEK6 and promotes its degradation via the 26S proteasome-dependent pathway. This chain is E3 ubiquitin-protein ligase DIS1, found in Oryza sativa subsp. japonica (Rice).